The sequence spans 2393 residues: Leucine-rich repeat serine/threonine-protein kinase 1 (2393 aa).

ANK repeat units follow at residues 56-86, 90-120, 123-152, 197-226, 230-259, 264-293, 317-347, 361-390, 407-437, and 439-464; these read HGRTPLMLAAHNGKLDSLRTILMLSPNSLNL, RGKTALHMAAESGETSIVLELVELGSDPMKS, EGHCALELAQMAGHNEVAAKLIDAIQKESE, EDETALLIACTNGHIEIVRHLLQFEEHLLQ, SKDTVIHAAVSSQNVEVLQLCLEKFPQLVK, EGSTCLHWAARCGSSECVSTILNFPFPSEF, ECRTAMYLAVAEGHLEVVKAMTDFKCTSIDG, RGRTPFMLAAFNQNLPLMTLLLDAGADVNL, IGSGALVEAVRSDGLHIVHFLLDRGALDTDN, and ALRLAAQGKNEKLIRVFLVRLVFADP. LRR repeat units lie at residues 532–553, 555–576, 580–600, 604–625, and 627–648; these read AITRVDLSDNRLNTFPSILFQM, SLRSLNLADNSIRKIEIPTYYI, SLEILNLRNNQLECIAIQFLS, QLQQLDVSKNELSQLPEYIWLC, and ALKELNASYNRLSTLPMVARAS. The interval 649-675 is disordered; the sequence is RGERPRLNNSNNNFNTQSPTQESNPIV. LRR repeat units lie at residues 718–739, 742–763, and 765–787; these read TLTTINLSFNKFHTFPFCLACT, RLLILNMSNNSMTSLPPMACVP, and HLRTLDLSYNKIQESFIEASPLH. The disordered stretch occupies residues 797 to 844; the sequence is TSNGSMLPKRRNSPARQHRSRSKSAVRSQRSLSVSRHHALIDPQKEEE. Basic residues predominate over residues 804-820; that stretch reads PKRRNSPARQHRSRSKS. Polar residues predominate over residues 821-830; sequence AVRSQRSLSV. The segment covering 835-844 has biased composition (basic and acidic residues); that stretch reads ALIDPQKEEE. LRR repeat units follow at residues 856 to 877, 883 to 905, 906 to 928, and 930 to 952; these read WLKTLQLAGNRLRSISVTNAAS, ALNVMDISDNKLLQAPPDVARLT, LLSMLNLSGNTAIKELPPDYGML, and RLWSLSLKGCSLKEPLESMVNVE. Positions 969–1167 constitute a Roc domain; that stretch reads ESKTYHHLRL…NTIYRTAWEV (199 aa). Residues 982–989, 1040–1044, and 1098–1101 contribute to the GTP site; these read GSDGVGKS, DFGGQ, and TNLD. Residues 1233–1422 enclose the COR domain; sequence FYAACTFLHD…GFWSRLVTRI (190 aa). 2 disordered regions span residues 1361-1382 and 1596-1633; these read CPSPAGSPTKSPLRRTSPTDQN and RNGSRSRTSSSASHRRSQDDGELPITSSSHMKGSRTTG. 2 stretches are compositionally biased toward polar residues: residues 1366–1382 and 1620–1633; these read GSPTKSPLRRTSPTDQN and ITSSSHMKGSRTTG. A Protein kinase domain is found at 1694–1992; it reads LKRSRMLGRG…LVGFCAAPEF (299 aa). ATP contacts are provided by residues 1700–1708 and K1726; that span reads LGRGAFGFV. Catalysis depends on D1847, which acts as the Proton acceptor.

The protein belongs to the protein kinase superfamily. TKL Ser/Thr protein kinase family. ROCO subfamily. Mg(2+) serves as cofactor. It depends on Mn(2+) as a cofactor. In terms of tissue distribution, expressed in cell bodies, but not in dendritic or axonal processes, of adult head neurons. Also present in non-neuronal tissues, such as the body wall musculature and the epithelial cells of the nematode vulva.

The protein resides in the golgi apparatus. It carries out the reaction L-seryl-[protein] + ATP = O-phospho-L-seryl-[protein] + ADP + H(+). The enzyme catalyses L-threonyl-[protein] + ATP = O-phospho-L-threonyl-[protein] + ADP + H(+). Its function is as follows. Determines polarized sorting of synaptic vesicle (SV) proteins to the axons by excluding SV proteins from the dendrite-specific transport machinery in the Golgi. Role in stress response. Appears to antagonize the effects of pink-1 both in the regulation of axon guidance and stress response. This chain is Leucine-rich repeat serine/threonine-protein kinase 1 (lrk-1), found in Caenorhabditis elegans.